Reading from the N-terminus, the 623-residue chain is Kelch repeat and BTB domain-containing protein 12 (623 aa).

Positions 25–92 (TDVVLVAEGV…MYSSNLPLTA (68 aa)) constitute a BTB domain. One can recognise a BACK domain in the interval 127–236 (CLGIYYYARD…GVDYLKGTMK (110 aa)). Kelch repeat units lie at residues 390-440 (NLYL…RMKG), 441-496 (RLYV…ALNG), 498-551 (IYVL…ASNA), and 557-607 (KLYV…LVAN).

The chain is Kelch repeat and BTB domain-containing protein 12 (kbtbd12) from Danio rerio (Zebrafish).